The following is a 548-amino-acid chain: (2S)-methylsuccinyl-CoA dehydrogenase (548 aa).

Residues 282–291 and 315–317 contribute to the FAD site; these read AVFTEPNTGS and WIT. Ser291 lines the substrate pocket. A substrate-binding site is contributed by 409 to 412; that stretch reads ESAR. FAD-binding positions include Arg437 and 505–509; that span reads QIHGG. The active-site Proton acceptor is the Glu532. FAD is bound at residue 534–536; the sequence is AAE.

This sequence belongs to the acyl-CoA dehydrogenase family. Homodimer. FAD is required as a cofactor.

The catalysed reaction is (2S)-methylsuccinyl-CoA + oxidized [electron-transfer flavoprotein] + H(+) = 2-methylfumaryl-CoA + reduced [electron-transfer flavoprotein]. Functionally, involved in the ethylmalonyl-CoA pathway, a new acetyl-CoA assimilation strategy that operates in a number of bacteria and replaces the glyoxylate cycle. Catalyzes the oxidation of (2S)-methylsuccinyl-CoA to yield mesaconyl-(C1)-CoA. Highly specific for (S)-methylsuccinyl-CoA. This is (2S)-methylsuccinyl-CoA dehydrogenase from Cereibacter sphaeroides (Rhodobacter sphaeroides).